A 3912-amino-acid polypeptide reads, in one-letter code: Ubiquitin carboxyl-terminal hydrolase puf (3912 aa).

Disordered stretches follow at residues alanine 101 to histidine 172, asparagine 518 to glutamate 590, aspartate 660 to aspartate 688, valine 851 to serine 878, and serine 1491 to serine 1611. Positions glutamate 106–proline 133 are enriched in basic and acidic residues. A compositionally biased stretch (low complexity) spans serine 134 to glycine 143. The span at lysine 150–threonine 164 shows a compositional bias: pro residues. Over residues serine 522–serine 532 the composition is skewed to low complexity. Basic and acidic residues predominate over residues isoleucine 576 to lysine 585. A compositionally biased stretch (acidic residues) spans aspartate 660–serine 687. Residues lysine 862–glutamine 876 show a composition bias toward polar residues. Residues valine 1511–arginine 1520 show a composition bias toward basic residues. Over residues threonine 1550 to glycine 1567 the composition is skewed to polar residues. Residues lysine 1583–proline 1594 are compositionally biased toward basic and acidic residues. Positions proline 1600 to alanine 1609 are enriched in pro residues. A USP domain is found at valine 2015 to arginine 2380. Cysteine 2024 functions as the Nucleophile in the catalytic mechanism. The span at tyrosine 2249–alanine 2263 shows a compositional bias: basic and acidic residues. A disordered region spans residues tyrosine 2249–lysine 2274. Residue histidine 2305 is the Proton acceptor of the active site. Disordered regions lie at residues glutamate 2391–alanine 2529, glutamine 3322–glutamine 3344, serine 3657–glutamate 3776, and alanine 3800–isoleucine 3912. Basic and acidic residues-rich tracts occupy residues valine 2402–lysine 2413 and glutamate 2433–threonine 2488. Positions asparagine 2504–glutamine 2523 are enriched in low complexity. Residues serine 3657–serine 3703 show a composition bias toward basic and acidic residues. The segment covering serine 3706 to lysine 3721 has biased composition (polar residues). Over residues serine 3741–leucine 3751 the composition is skewed to acidic residues. Residues threonine 3766 to glutamate 3776 are compositionally biased toward basic and acidic residues. The span at proline 3865–glutamate 3877 shows a compositional bias: polar residues. Residues serine 3878–isoleucine 3912 show a composition bias toward low complexity.

This sequence belongs to the peptidase C19 family. Interacts with Myc and ago.

The protein resides in the nucleus. The catalysed reaction is Thiol-dependent hydrolysis of ester, thioester, amide, peptide and isopeptide bonds formed by the C-terminal Gly of ubiquitin (a 76-residue protein attached to proteins as an intracellular targeting signal).. In terms of biological role, ubiquitin hydrolase that can remove conjugated ubiquitin from target proteins and polyubiquitin chains. Essential for Myc-mediated cell growth and proliferation in developing eyes and wings. In the wing and eye, the deubiquitinating activity acts as an antagonist to the SCF E3 ubiquitin-protein ligase member archipelago (ago) to regulate Myc and CycE stability and thus control cell growth and proliferation. Also appears to regulate ago by modulating its induction by Myc. May also promote cell apoptosis in the wing imaginal disk, acting in an apoptotic pathway that appears to be largely independent of Myc. Required for preventing the activation of the immune deficiency (Imd) and Toll signaling cascades under unchallenged conditions. Also appears to be involved in modulating the differential expression of certain antimicrobial peptides (AMP) in response to infection by either Gram-positive or Gram-negative bacteria. Involved in the regulation of DNA damage repair pathways, including euchromatic site-specific double strand break (DSB) repair. In Drosophila melanogaster (Fruit fly), this protein is Ubiquitin carboxyl-terminal hydrolase puf.